Reading from the N-terminus, the 98-residue chain is Cystatin-A (98 aa).

M1 is modified (N-acetylmethionine). The Secondary area of contact motif lies at 46 to 50; the sequence is QVVAG.

Belongs to the cystatin family.

It is found in the cytoplasm. This is an intracellular thiol proteinase inhibitor. The sequence is that of Cystatin-A (CSTA) from Felis catus (Cat).